We begin with the raw amino-acid sequence, 198 residues long: Ribonuclease HII (198 aa).

The RNase H type-2 domain occupies 3 to 198; it reads LSVGGIDEAG…SWETVGKLFK (196 aa). Residues D9, E10, and D104 each contribute to the a divalent metal cation site.

It belongs to the RNase HII family. Mn(2+) serves as cofactor. It depends on Mg(2+) as a cofactor.

Its subcellular location is the cytoplasm. It catalyses the reaction Endonucleolytic cleavage to 5'-phosphomonoester.. In terms of biological role, endonuclease that specifically degrades the RNA of RNA-DNA hybrids. The sequence is that of Ribonuclease HII from Pyrobaculum arsenaticum (strain DSM 13514 / JCM 11321 / PZ6).